A 1473-amino-acid polypeptide reads, in one-letter code: Ovostatin (1473 aa).

The N-terminal stretch at 1 to 36 is a signal peptide; it reads MHCFLGREILSFFCLTVRKMWLKFILAILLLHAAAG. Residues N67, N82, N89, N191, N342, N403, N527, N588, N757, N1141, N1221, N1315, and N1347 are each glycosylated (N-linked (GlcNAc...) asparagine).

It belongs to the protease inhibitor I39 (alpha-2-macroglobulin) family. In terms of assembly, homotetramer, which consists of two pairs of disulfide-linked chains. In terms of processing, lacks the thioester bond found in other members of this family. Post-translationally, glycosylated; contains 56 glucosamine units per subunit.

Its subcellular location is the secreted. Its function is as follows. Is able to inhibit all four classes of proteinases by a unique 'trapping' mechanism. This protein has a peptide stretch, called the 'bait region' which contains specific cleavage sites for different proteinases. When a proteinase cleaves the bait region, a conformational change is induced in the protein which traps the proteinase. The entrapped enzyme remains active against low molecular weight substrates (activity against high molecular weight substrates is greatly reduced). This Gallus gallus (Chicken) protein is Ovostatin.